Reading from the N-terminus, the 274-residue chain is Triosephosphate isomerase (274 aa).

Position 31-33 (31-33 (NWK)) interacts with substrate. His-118 functions as the Electrophile in the catalytic mechanism. Residue Glu-188 is the Proton acceptor of the active site. Substrate is bound by residues Gly-194, Ser-234, and 255–256 (GG).

The protein belongs to the triosephosphate isomerase family. In terms of assembly, homodimer.

The protein localises to the cytoplasm. It carries out the reaction D-glyceraldehyde 3-phosphate = dihydroxyacetone phosphate. Its pathway is carbohydrate biosynthesis; gluconeogenesis. The protein operates within carbohydrate degradation; glycolysis; D-glyceraldehyde 3-phosphate from glycerone phosphate: step 1/1. Its function is as follows. Involved in the gluconeogenesis. Catalyzes stereospecifically the conversion of dihydroxyacetone phosphate (DHAP) to D-glyceraldehyde-3-phosphate (G3P). The polypeptide is Triosephosphate isomerase (Chlamydia trachomatis serovar A (strain ATCC VR-571B / DSM 19440 / HAR-13)).